Here is an 85-residue protein sequence, read N- to C-terminus: RNA-binding protein Hfq (85 aa).

In terms of domain architecture, Sm spans 9 to 68 (DPFLNALRRERIPVSIYLVNGIKLQGQIESFDQFVILLKNTVNQMVYKHAISTVVPARPV). The disordered stretch occupies residues 66–85 (RPVNHHHASDRPATLEKTEE). Basic and acidic residues predominate over residues 72-85 (HASDRPATLEKTEE).

Belongs to the Hfq family. Homohexamer.

RNA chaperone that binds small regulatory RNA (sRNAs) and mRNAs to facilitate mRNA translational regulation in response to envelope stress, environmental stress and changes in metabolite concentrations. Also binds with high specificity to tRNAs. This Photobacterium profundum (strain SS9) protein is RNA-binding protein Hfq.